A 464-amino-acid chain; its full sequence is UDP-glucose:undecaprenyl-phosphate glucose-1-phosphate transferase (464 aa).

The Cytoplasmic portion of the chain corresponds to 1–15 (MTNLKKRERAKTNAS). Residues 16–36 (LISMVQRFSDITIMFAGLWLV) traverse the membrane as a helical segment. Topologically, residues 37 to 38 (CE) are periplasmic. A helical membrane pass occupies residues 39-59 (VSGLSFLYMHLLVALITLVVF). The Cytoplasmic segment spans residues 60–80 (QMLGGITDFYRSWRGVRAATE). The chain crosses the membrane as a helical span at residues 81–101 (FALLLQNWTLSVIFSAGLVAF). Residues 102 to 104 (NND) lie on the Periplasmic side of the membrane. The chain crosses the membrane as a helical span at residues 105-125 (FDTQLKIWLAWYALTSIGLVV). Over 126-278 (CRSCIRIGAG…VNRLLKRAED (153 aa)) the chain is Cytoplasmic. Residues 279–299 (IVLATLILLLISPVLCCIALA) form a helical membrane-spanning segment. The Periplasmic portion of the chain corresponds to 300-464 (VKLSSPGPVI…FKGFVNKAAY (165 aa)).

This sequence belongs to the bacterial sugar transferase family.

Its subcellular location is the cell inner membrane. It catalyses the reaction di-trans,octa-cis-undecaprenyl phosphate + UDP-alpha-D-glucose = alpha-D-glucosyl di-trans,octa-cis-undecaprenyl diphosphate + UMP. It participates in exopolysaccharide biosynthesis; colanic acid biosynthesis. Is the initiating enzyme for colanic acid (CA) synthesis. Catalyzes the transfer of the glucose-1-phosphate moiety from UDP-Glc onto the carrier lipid undecaprenyl phosphate (C55-P), forming a phosphoanhydride bond yielding to glucosyl-pyrophosphoryl-undecaprenol (Glc-PP-C55). Also possesses a weak galactose-1-P transferase activity. The protein is UDP-glucose:undecaprenyl-phosphate glucose-1-phosphate transferase (wcaJ) of Escherichia coli (strain K12).